The primary structure comprises 456 residues: Arginine biosynthesis bifunctional protein ArgJ, mitochondrial (456 aa).

Residues T184, K213, T224, E311, N451, and T456 each contribute to the substrate site. The active-site Nucleophile is T224.

It belongs to the ArgJ family. In terms of assembly, heterodimer of an alpha and a beta chain. In terms of processing, the alpha and beta chains are autoproteolytically processed from a single precursor protein within the mitochondrion.

Its subcellular location is the mitochondrion matrix. It carries out the reaction N(2)-acetyl-L-ornithine + L-glutamate = N-acetyl-L-glutamate + L-ornithine. It catalyses the reaction L-glutamate + acetyl-CoA = N-acetyl-L-glutamate + CoA + H(+). It functions in the pathway amino-acid biosynthesis; L-arginine biosynthesis; L-ornithine and N-acetyl-L-glutamate from L-glutamate and N(2)-acetyl-L-ornithine (cyclic): step 1/1. It participates in amino-acid biosynthesis; L-arginine biosynthesis; N(2)-acetyl-L-ornithine from L-glutamate: step 1/4. Catalyzes two activities which are involved in the cyclic version of arginine biosynthesis: the synthesis of acetylglutamate from glutamate and acetyl-CoA, and of ornithine by transacetylation between acetylornithine and glutamate. This is Arginine biosynthesis bifunctional protein ArgJ, mitochondrial from Aspergillus niger (strain ATCC MYA-4892 / CBS 513.88 / FGSC A1513).